We begin with the raw amino-acid sequence, 217 residues long: GrpE protein homolog 1, mitochondrial (217 aa).

The transit peptide at 1–27 (MAARCVRLARRSLPALALSFRPSPRLL) directs the protein to the mitochondrion. N6-acetyllysine; alternate is present on Lys-94. Lys-94 carries the post-translational modification N6-succinyllysine; alternate. Lys-100 is subject to N6-acetyllysine. An N6-succinyllysine modification is found at Lys-120. The residue at position 215 (Lys-215) is an N6-acetyllysine; alternate. Lys-215 bears the N6-succinyllysine; alternate mark.

It belongs to the GrpE family. Probable component of the PAM complex at least composed of a mitochondrial HSP70 protein, GRPEL1 or GRPEL2, TIMM44, TIMM16/PAM16 and TIMM14/DNAJC19. Binds to HSP70, HSC70 and HSJ1B. In terms of tissue distribution, ubiquitous. Particularly abundant in heart, kidney and liver.

It localises to the mitochondrion matrix. Essential component of the PAM complex, a complex required for the translocation of transit peptide-containing proteins from the inner membrane into the mitochondrial matrix in an ATP-dependent manner. Seems to control the nucleotide-dependent binding of mitochondrial HSP70 to substrate proteins. This chain is GrpE protein homolog 1, mitochondrial (Grpel1), found in Rattus norvegicus (Rat).